The primary structure comprises 760 residues: H(+)/Cl(-) exchange transporter 4 (760 aa).

At 1–67 the chain is on the cytoplasmic side; the sequence is MVNAGAMSGS…WEFIKSLLDA (67 aa). The tract at residues 14-63 is required for localization in the endoplasmic reticulum; the sequence is MDFLDEPFPDVGTYEDFHTIDWLREKSRDTDRHRKITSKSKESIWEFIKS. The next 2 helical transmembrane spans lie at 68 to 105 and 151 to 174; these read WSGW…VCLS and LNYL…VRVF. The Selectivity filter part_1 motif lies at 180–184; sequence GSGIP. Ser181 contributes to the chloride binding site. An intramembrane region (helical) is located at residues 183–190; sequence IPEIKTIL. The next 2 helical transmembrane spans lie at 200-218 and 224-243; these read GKWT…VSSG and EGPL…SLFS. The short motif at 222-226 is the Selectivity filter part_2 element; the sequence is GKEGP. 2 consecutive intramembrane regions (helical) follow at residues 255 to 267 and 271 to 279; these read VLSA…VSVA and PIGGVLFSL. 5 helical membrane-spanning segments follow: residues 291–309, 333–358, 365–385, 442–462, and 467–486; these read LWRS…RSIN, FPFI…AWCR, LGKY…IIAY, MWQL…TFGM, and GLFI…VGIG. The short motif at 467–471 is the Selectivity filter part_3 element; it reads GLFIP. Residue Phe469 coordinates chloride. 2 consecutive intramembrane regions (helical) follow at residues 514–528 and 532–543; these read GLYA…LGGV and TVSLVVIMFELT. Positions 544 to 547 form an intramembrane region, note=Loop between two helices; that stretch reads GGLE. Residues 548–566 form a helical membrane-spanning segment; it reads YIVPLMAAAVTSKWVADAF. Residues 567–760 are Cytoplasmic-facing; it reads GKEGIYEAHI…NQDPESIMFN (194 aa). Tyr572 provides a ligand contact to chloride. The region spanning 600–666 is the CBS 1 domain; that stretch reads MRPRRGEPPL…AIKNARQRQE (67 aa). ATP is bound by residues Ser610 and 631–633; that span reads YNG. Residues 667 to 696 are required for localization in the endoplasmic reticulum; it reads GIVSNSIMYFTEEPPELPANSPHPLKLRRI. Positions 697 to 755 constitute a CBS 2 domain; sequence LNLSPFTVTDHTPMETVVDIFRKLGLRQCLVTRSGRLLGIITKKDVLRHMAQMANQDPE. 738–741 serves as a coordination point for ATP; sequence TKKD.

This sequence belongs to the chloride channel (TC 2.A.49) family. ClC-4/CLCN4 subfamily. Monomer. Forms heterodimers with CLCN3. In terms of tissue distribution, abundant in skeletal muscle and also detectable in brain and heart.

The protein resides in the early endosome membrane. Its subcellular location is the late endosome membrane. It is found in the endoplasmic reticulum membrane. The protein localises to the lysosome membrane. It localises to the recycling endosome membrane. Strongly outwardly rectifying, electrogenic H(+)/Cl(-)exchanger which mediates the exchange of chloride ions against protons. The CLC channel family contains both chloride channels and proton-coupled anion transporters that exchange chloride or another anion for protons. The presence of conserved gating glutamate residues is typical for family members that function as antiporters. This chain is H(+)/Cl(-) exchange transporter 4 (CLCN4), found in Homo sapiens (Human).